We begin with the raw amino-acid sequence, 373 residues long: Velvet complex subunit RYP3 (373 aa).

The span at 1–10 (MYTLKQDRPH) shows a compositional bias: basic and acidic residues. Disordered stretches follow at residues 1–26 (MYTL…LQHG) and 344–373 (RKDG…ENEG). A Velvet domain is found at 48–344 (VYEGRIYSLD…AFQGIKIPIR (297 aa)). A compositionally biased stretch (acidic residues) spans 364–373 (GEGEDWENEG).

It belongs to the velvet family. VelB subfamily. As to quaternary structure, component of the heterotrimeric velvet complex composed of LAE1, VEL1 and VEL2; VEL1A acting as a bridging protein between LAE1 and VEL2. Forms a heterodimeric complex with VOS1; the formation of the VEL2-VOS1 complex is light-dependent.

It is found in the nucleus. The protein resides in the cytoplasm. Functionally, component of the velvet transcription factor complex that controls sexual/asexual developmental ratio in response to light, promoting sexual development in the darkness while stimulating asexual sporulation under illumination. The velvet complex acts as a global regulator for secondary metabolite gene expression. Component of the RYP2-RYP3 heterodimeric complex that plays a dual role in activating genes associated with spore maturation and repressing certain development-associated genes. The complex binds DNA through the DNA-binding domain of RYP2 that recognizes an 11-nucleotide consensus sequence 5'-CTGGCCGCGGC-3' consisting of two motifs in the promoters of key developmental regulatory genes. Required for viable spore production and regulation of sporulation in response to temperature, as well as for the switch to yeast-form in the presence of host cells. This is Velvet complex subunit RYP3 (RYP3) from Ajellomyces capsulatus (Darling's disease fungus).